Consider the following 68-residue polypeptide: Tabimmunregulin 12 (68 aa).

The N-terminal stretch at 1–24 is a signal peptide; that stretch reads MLFKSYVYFLAGLLLVGLFTSCDA. A propeptide spanning residues 25-38 is cleaved from the precursor; it reads DAQYEELVPGFFRK.

In terms of tissue distribution, expressed in salivary glands.

Its subcellular location is the secreted. Functionally, horsefly salivary gland immunosuppressant protein that likely inhibits the host inflammatory response by regulation of anti- and pro-inflammatory cytokines. When tested on mouse splenocytes in the presence of LPS, it increases the secretion of the proinflammatory cytokine interleukin-10 (IL10) and decreases the secretion of the proinflammatory cytokine interferon-gamma (IFNG) in a dose-dependent manner. The chain is Tabimmunregulin 12 from Tabanus yao (Horsefly).